The sequence spans 434 residues: Histidinol dehydrogenase (434 aa).

Residues Tyr130, Gln188, and Asn211 each contribute to the NAD(+) site. The substrate site is built by Ser237, Gln259, and His262. 2 residues coordinate Zn(2+): Gln259 and His262. Catalysis depends on proton acceptor residues Glu326 and His327. Residues His327, Asp360, Glu414, and His419 each contribute to the substrate site. A Zn(2+)-binding site is contributed by Asp360. Residue His419 coordinates Zn(2+).

It belongs to the histidinol dehydrogenase family. As to quaternary structure, homodimer. It depends on Zn(2+) as a cofactor.

It carries out the reaction L-histidinol + 2 NAD(+) + H2O = L-histidine + 2 NADH + 3 H(+). The protein operates within amino-acid biosynthesis; L-histidine biosynthesis; L-histidine from 5-phospho-alpha-D-ribose 1-diphosphate: step 9/9. Its function is as follows. Catalyzes the sequential NAD-dependent oxidations of L-histidinol to L-histidinaldehyde and then to L-histidine. The sequence is that of Histidinol dehydrogenase from Shigella flexneri.